Here is a 309-residue protein sequence, read N- to C-terminus: Homoserine kinase (309 aa).

Position 91–101 (91–101) interacts with ATP; sequence PIGSGLGSSAC.

The protein belongs to the GHMP kinase family. Homoserine kinase subfamily.

Its subcellular location is the cytoplasm. The enzyme catalyses L-homoserine + ATP = O-phospho-L-homoserine + ADP + H(+). It participates in amino-acid biosynthesis; L-threonine biosynthesis; L-threonine from L-aspartate: step 4/5. Catalyzes the ATP-dependent phosphorylation of L-homoserine to L-homoserine phosphate. The polypeptide is Homoserine kinase (Cronobacter sakazakii (strain ATCC BAA-894) (Enterobacter sakazakii)).